Here is a 231-residue protein sequence, read N- to C-terminus: 5'-methylthioadenosine/S-adenosylhomocysteine nucleosidase (231 aa).

Catalysis depends on Glu-12, which acts as the Proton acceptor. Substrate-binding positions include Gly-78, Met-153, and 174–175 (ME). Asp-198 serves as the catalytic Proton donor.

This sequence belongs to the PNP/UDP phosphorylase family. MtnN subfamily.

The enzyme catalyses S-adenosyl-L-homocysteine + H2O = S-(5-deoxy-D-ribos-5-yl)-L-homocysteine + adenine. It catalyses the reaction S-methyl-5'-thioadenosine + H2O = 5-(methylsulfanyl)-D-ribose + adenine. The catalysed reaction is 5'-deoxyadenosine + H2O = 5-deoxy-D-ribose + adenine. The protein operates within amino-acid biosynthesis; L-methionine biosynthesis via salvage pathway; S-methyl-5-thio-alpha-D-ribose 1-phosphate from S-methyl-5'-thioadenosine (hydrolase route): step 1/2. In terms of biological role, catalyzes the irreversible cleavage of the glycosidic bond in both 5'-methylthioadenosine (MTA) and S-adenosylhomocysteine (SAH/AdoHcy) to adenine and the corresponding thioribose, 5'-methylthioribose and S-ribosylhomocysteine, respectively. Also cleaves 5'-deoxyadenosine, a toxic by-product of radical S-adenosylmethionine (SAM) enzymes, into 5-deoxyribose and adenine. The polypeptide is 5'-methylthioadenosine/S-adenosylhomocysteine nucleosidase (Bacillus thuringiensis subsp. konkukian (strain 97-27)).